The primary structure comprises 1176 residues: Chromosome partition protein Smc (1176 aa).

An ATP-binding site is contributed by proline 32–asparagine 39. Residues glycine 169–glutamine 506 are a coiled coil. The region spanning leucine 521–alanine 623 is the SMC hinge domain. Coiled-coil stretches lie at residues aspartate 653 to methionine 947 and glutamate 987 to threonine 1024.

It belongs to the SMC family. In terms of assembly, homodimer.

Its subcellular location is the cytoplasm. Its function is as follows. Required for chromosome condensation and partitioning. In Bordetella petrii (strain ATCC BAA-461 / DSM 12804 / CCUG 43448), this protein is Chromosome partition protein Smc.